Here is a 329-residue protein sequence, read N- to C-terminus: Calponin-3 (329 aa).

Lys23 is subject to N6-acetyllysine. The region spanning 26–130 is the Calponin-homology (CH) domain; sequence HQAEEDLRNW…TLVALAGLAK (105 aa). Position 158 is an N6-methyllysine (Lys158). Calponin-like repeat units lie at residues 164-189, 204-229, and 243-268; these read IGLQ…RHLY, ISLQ…RDIY, and ISLQ…RQVY. Residues 279 to 329 form a disordered region; sequence PVIHNGSQGTGTNGSEISDSDYQAEYPDEYHGEYQDDYPRDYQYSDQGIDY. A compositionally biased stretch (basic and acidic residues) spans 306 to 318; that stretch reads DEYHGEYQDDYPR. Ser323 bears the Phosphoserine mark.

Belongs to the calponin family. Expressed in both non-smooth muscle tissues as well as smooth muscle tissues.

Functionally, thin filament-associated protein that is implicated in the regulation and modulation of smooth muscle contraction. It is capable of binding to actin, calmodulin and tropomyosin. The interaction of calponin with actin inhibits the actomyosin Mg-ATPase activity. The chain is Calponin-3 (CNN3) from Homo sapiens (Human).